We begin with the raw amino-acid sequence, 136 residues long: Large ribosomal subunit protein bL19 (136 aa).

The segment at 1 to 23 (MEETVNNQETPETSEEETADEET) is disordered. The segment covering 12–23 (ETSEEETADEET) has biased composition (acidic residues).

The protein belongs to the bacterial ribosomal protein bL19 family.

In terms of biological role, this protein is located at the 30S-50S ribosomal subunit interface and may play a role in the structure and function of the aminoacyl-tRNA binding site. The polypeptide is Large ribosomal subunit protein bL19 (Dehalococcoides mccartyi (strain ATCC BAA-2266 / KCTC 15142 / 195) (Dehalococcoides ethenogenes (strain 195))).